The sequence spans 302 residues: Sulfate adenylyltransferase subunit 2 (302 aa).

Positions 280-302 are disordered; sequence RQGRLIDSDQSASMEQKKRQGYF.

This sequence belongs to the PAPS reductase family. CysD subfamily. In terms of assembly, heterodimer composed of CysD, the smaller subunit, and CysN.

The catalysed reaction is sulfate + ATP + H(+) = adenosine 5'-phosphosulfate + diphosphate. It participates in sulfur metabolism; hydrogen sulfide biosynthesis; sulfite from sulfate: step 1/3. In terms of biological role, with CysN forms the ATP sulfurylase (ATPS) that catalyzes the adenylation of sulfate producing adenosine 5'-phosphosulfate (APS) and diphosphate, the first enzymatic step in sulfur assimilation pathway. APS synthesis involves the formation of a high-energy phosphoric-sulfuric acid anhydride bond driven by GTP hydrolysis by CysN coupled to ATP hydrolysis by CysD. The sequence is that of Sulfate adenylyltransferase subunit 2 from Shewanella baltica (strain OS185).